The following is a 115-amino-acid chain: MKIVAFTLVAFVALAGASCPYAAPAAAPAPAAPSGYPAPPCPTNYLFSCQPNLAPAPCAQEAPAYGSAGAYTEQVPQYVGNPSREQVQQFHQRIGMAALMEELRGLGQGIQGQQY.

The signal sequence occupies residues 1–17; the sequence is MKIVAFTLVAFVALAGA. The region spanning 35-72 is the VM domain; it reads GYPAPPCPTNYLFSCQPNLAPAPCAQEAPAYGSAGAYT.

This sequence belongs to the vitelline membrane family.

The protein localises to the secreted. Functionally, major early eggshell protein. This Drosophila yakuba (Fruit fly) protein is Vitelline membrane protein Vm32E.